The chain runs to 420 residues: UDP-N-acetylglucosamine 1-carboxyvinyltransferase (420 aa).

Residue 22–23 (KN) coordinates phosphoenolpyruvate. Residue Arg-92 coordinates UDP-N-acetyl-alpha-D-glucosamine. The active-site Proton donor is the Cys-116. At Cys-116 the chain carries 2-(S-cysteinyl)pyruvic acid O-phosphothioketal. Residues 121–125 (RPIDL), Asp-307, and Leu-329 contribute to the UDP-N-acetyl-alpha-D-glucosamine site.

Belongs to the EPSP synthase family. MurA subfamily.

It is found in the cytoplasm. The catalysed reaction is phosphoenolpyruvate + UDP-N-acetyl-alpha-D-glucosamine = UDP-N-acetyl-3-O-(1-carboxyvinyl)-alpha-D-glucosamine + phosphate. The protein operates within cell wall biogenesis; peptidoglycan biosynthesis. Functionally, cell wall formation. Adds enolpyruvyl to UDP-N-acetylglucosamine. In Nitratiruptor sp. (strain SB155-2), this protein is UDP-N-acetylglucosamine 1-carboxyvinyltransferase.